The sequence spans 465 residues: Cysteine--tRNA ligase (465 aa).

Position 27 (cysteine 27) interacts with Zn(2+). The short motif at 29-39 is the 'HIGH' region element; that stretch reads PTVYNFFHIGN. Zn(2+)-binding residues include cysteine 207, histidine 232, and glutamate 236. The 'KMSKS' region motif lies at 264 to 268; the sequence is KMSKS. Lysine 267 is a binding site for ATP.

The protein belongs to the class-I aminoacyl-tRNA synthetase family. Monomer. It depends on Zn(2+) as a cofactor.

Its subcellular location is the cytoplasm. The catalysed reaction is tRNA(Cys) + L-cysteine + ATP = L-cysteinyl-tRNA(Cys) + AMP + diphosphate. This Clostridium kluyveri (strain NBRC 12016) protein is Cysteine--tRNA ligase.